The following is a 439-amino-acid chain: Microfibrillar-associated protein 1 (439 aa).

2 disordered regions span residues 1–27 (MSVP…NEKG) and 39–200 (YVSG…PRLK). Ser2 bears the N-acetylserine mark. Ser52 and Ser53 each carry phosphoserine. Over residues 61 to 70 (QFIKKAKEQE) the composition is skewed to basic and acidic residues. Lys67 participates in a covalent cross-link: Glycyl lysine isopeptide (Lys-Gly) (interchain with G-Cter in SUMO2). Over residues 71-81 (AEPEEQEEDSS) the composition is skewed to acidic residues. Ser94, Ser116, Ser118, Ser132, and Ser133 each carry phosphoserine. Acidic residues-rich tracts occupy residues 112 to 122 (VVGESDSEVEG) and 131 to 144 (DSSE…DDEE). A compositionally biased stretch (basic and acidic residues) spans 145 to 163 (IERRRGMMRQRAQERKNEE). Residues 178–195 (ESESESEYEEYTDSEDEM) are compositionally biased toward acidic residues. A Glycyl lysine isopeptide (Lys-Gly) (interchain with G-Cter in SUMO2) cross-link involves residue Lys249. Phosphothreonine is present on Thr267. A Glycyl lysine isopeptide (Lys-Gly) (interchain with G-Cter in SUMO2) cross-link involves residue Lys357. The residue at position 361 (Ser361) is a Phosphoserine. Glycyl lysine isopeptide (Lys-Gly) (interchain with G-Cter in SUMO2) cross-links involve residues Lys371, Lys381, Lys415, and Lys418. A Phosphoserine modification is found at Ser432.

This sequence belongs to the MFAP1 family. As to quaternary structure, component of the spliceosome B complex. Interacts with PRPF38A (via N-terminal interaction domain).

It is found in the nucleus. In terms of biological role, involved in pre-mRNA splicing as a component of the spliceosome. This chain is Microfibrillar-associated protein 1, found in Homo sapiens (Human).